The primary structure comprises 394 residues: Phosphoglycerate kinase (394 aa).

Substrate-binding positions include 21 to 23 (DLN), 59 to 62 (HLGR), Arg-117, and Arg-150. Residues Lys-201, Glu-318, and 344-347 (GGDT) each bind ATP.

This sequence belongs to the phosphoglycerate kinase family. Monomer.

The protein localises to the cytoplasm. The catalysed reaction is (2R)-3-phosphoglycerate + ATP = (2R)-3-phospho-glyceroyl phosphate + ADP. Its pathway is carbohydrate degradation; glycolysis; pyruvate from D-glyceraldehyde 3-phosphate: step 2/5. The polypeptide is Phosphoglycerate kinase (Blochmanniella pennsylvanica (strain BPEN)).